A 197-amino-acid chain; its full sequence is Phosphoheptose isomerase (197 aa).

The region spanning 36–197 (MVNALLNEGK…IDSQLFGSEE (162 aa)) is the SIS domain. Substrate is bound at residue 51–53 (NGG). The Zn(2+) site is built by His60 and Glu64. Residues Glu64, 93-94 (ND), 119-121 (STS), Ser124, and Gln174 contribute to the substrate site. Zn(2+) is bound by residues Gln174 and His182.

Belongs to the SIS family. GmhA subfamily. Homotetramer. It depends on Zn(2+) as a cofactor.

It is found in the cytoplasm. The catalysed reaction is 2 D-sedoheptulose 7-phosphate = D-glycero-alpha-D-manno-heptose 7-phosphate + D-glycero-beta-D-manno-heptose 7-phosphate. Its pathway is carbohydrate biosynthesis; D-glycero-D-manno-heptose 7-phosphate biosynthesis; D-glycero-alpha-D-manno-heptose 7-phosphate and D-glycero-beta-D-manno-heptose 7-phosphate from sedoheptulose 7-phosphate: step 1/1. Functionally, catalyzes the isomerization of sedoheptulose 7-phosphate in D-glycero-D-manno-heptose 7-phosphate. This chain is Phosphoheptose isomerase, found in Pseudomonas fluorescens (strain SBW25).